The following is a 120-amino-acid chain: C-C motif chemokine 16 (120 aa).

Positions 1–23 are cleaved as a signal peptide; the sequence is MKVSEAALSLLVLILIITSASRS. 2 disulfides stabilise this stretch: Cys-37-Cys-60 and Cys-38-Cys-76.

The protein belongs to the intercrine beta (chemokine CC) family. In terms of tissue distribution, mainly expressed in liver, also found in spleen and thymus. Highly expressed in LPS- and IFN-gamma-activated monocytes, weakly in some lymphocytes, including natural killer cells, gamma-delta T-cells, and some T-cell clones.

The protein resides in the secreted. Shows chemotactic activity for lymphocytes and monocytes but not neutrophils. Also shows potent myelosuppressive activity, suppresses proliferation of myeloid progenitor cells. Recombinant SCYA16 shows chemotactic activity for monocytes and THP-1 monocytes, but not for resting lymphocytes and neutrophils. Induces a calcium flux in THP-1 cells that were desensitized by prior expression to RANTES. The protein is C-C motif chemokine 16 (CCL16) of Homo sapiens (Human).